Here is a 369-residue protein sequence, read N- to C-terminus: 4-hydroxy-3-methylbut-2-en-1-yl diphosphate synthase (flavodoxin) (369 aa).

[4Fe-4S] cluster contacts are provided by C270, C273, C305, and E312.

It belongs to the IspG family. It depends on [4Fe-4S] cluster as a cofactor.

It catalyses the reaction (2E)-4-hydroxy-3-methylbut-2-enyl diphosphate + oxidized [flavodoxin] + H2O + 2 H(+) = 2-C-methyl-D-erythritol 2,4-cyclic diphosphate + reduced [flavodoxin]. It functions in the pathway isoprenoid biosynthesis; isopentenyl diphosphate biosynthesis via DXP pathway; isopentenyl diphosphate from 1-deoxy-D-xylulose 5-phosphate: step 5/6. Functionally, converts 2C-methyl-D-erythritol 2,4-cyclodiphosphate (ME-2,4cPP) into 1-hydroxy-2-methyl-2-(E)-butenyl 4-diphosphate. The sequence is that of 4-hydroxy-3-methylbut-2-en-1-yl diphosphate synthase (flavodoxin) from Pseudomonas entomophila (strain L48).